The sequence spans 254 residues: D-aminoacyl-tRNA deacylase (254 aa).

Residues 61-83 form a disordered region; it reads KPTLTVHTPGNLTEDNSHGGNPE. The span at 65–74 shows a compositional bias: polar residues; that stretch reads TVHTPGNLTE.

Belongs to the DtdA deacylase family. As to quaternary structure, monomer. Zn(2+) is required as a cofactor.

The catalysed reaction is a D-aminoacyl-tRNA + H2O = a tRNA + a D-alpha-amino acid + H(+). It catalyses the reaction glycyl-tRNA(Ala) + H2O = tRNA(Ala) + glycine + H(+). D-aminoacyl-tRNA deacylase with broad substrate specificity. By recycling D-aminoacyl-tRNA to D-amino acids and free tRNA molecules, this enzyme counteracts the toxicity associated with the formation of D-aminoacyl-tRNA entities in vivo. The protein is D-aminoacyl-tRNA deacylase of Methanococcus maripaludis (strain C7 / ATCC BAA-1331).